Here is a 291-residue protein sequence, read N- to C-terminus: Transcription factor bHLH53 (291 aa).

In terms of domain architecture, bHLH spans 163–212 (PTLSSQSIAARGRRRRIAEKTHELGKLIPGGNKLNTAEMFQAAAKYVKFL).

As to quaternary structure, homodimer. Expressed constitutively in roots, leaves, stems, and flowers.

It is found in the nucleus. This chain is Transcription factor bHLH53 (BHLH53), found in Arabidopsis thaliana (Mouse-ear cress).